A 1771-amino-acid polypeptide reads, in one-letter code: Atrochrysone carboxylic acid synthase (1771 aa).

The interval 38 to 269 is N-terminal acylcarrier protein transacylase domain (SAT); sequence HLHSKDRRHH…SLPVFGGLCH (232 aa). The region spanning 402–836 is the Ketosynthase family 3 (KS3) domain; it reads QSKIAIVGMS…GGNTSVVLEE (435 aa). Active-site for beta-ketoacyl synthase activity residues include C575, H711, and H754. A malonyl-CoA:ACP transacylase (MAT) domain region spans residues 937-1257; sequence FAFTGQGASY…LSSLHCAGVE (321 aa). A product template (PT) domain region spans residues 1322 to 1641; the sequence is TSTVQKIVEE…RLLLNRFFSP (320 aa). An N-terminal hotdog fold region spans residues 1326–1461; sequence QKIVEESFDG…AKIYYCDASE (136 aa). The 311-residue stretch at 1326–1636 folds into the PKS/mFAS DH domain; sequence QKIVEESFDG…FRRYPRLLLN (311 aa). H1358 serves as the catalytic Proton acceptor; for dehydratase activity. The tract at residues 1488 to 1636 is C-terminal hotdog fold; that stretch reads IANRFSGRMA…FRRYPRLLLN (149 aa). D1547 functions as the Proton donor; for dehydratase activity in the catalytic mechanism. Low complexity predominate over residues 1668–1681; that stretch reads AATSTTSTTSTAST. Residues 1668–1695 are disordered; it reads AATSTTSTTSTASTGQPPKVDETSPVDS. The region spanning 1693–1770 is the Carrier domain; it reads VDSNSTAARA…DLKSWLLEYY (78 aa). S1730 is subject to O-(pantetheine 4'-phosphoryl)serine.

The catalysed reaction is holo-[ACP] + 8 malonyl-CoA + 8 H(+) = atrochrysone carboxyl-[ACP] + 8 CO2 + 8 CoA + 2 H2O. It participates in secondary metabolite biosynthesis. Its function is as follows. Non-reducing polyketide synthase; part of the gene cluster that mediates the biosynthesis of geodin, an intermediate in the biosynthesis of other natural products. The pathway begins with the synthesis of atrochrysone thioester by the polyketide synthase (PKS) gedC. The atrochrysone carboxyl ACP thioesterase gedB then breaks the thioester bond and releases the atrochrysone carboxylic acid from gedC. The atrochrysone carboxylic acid is then converted to atrochrysone which is further transformed into emodinanthrone. The next step is performed by the emodinanthrone oxygenase gedH that catalyzes the oxidation of emodinanthrone to emodin. Emodin O-methyltransferase encoded probably by gedA then catalyzes methylation of the 8-hydroxy group of emodin to form questin. Ring cleavage of questin by questin oxidase gedK leads to desmethylsulochrin via several intermediates including questin epoxide. Another methylation step probably catalyzed by methyltransferase gedG leads to the formation of sulochrin which is further converted to dihydrogeodin by the sulochrin halogenase gedL. Finally, the dihydrogeodin oxidase gedJ catalyzes the stereospecific phenol oxidative coupling reaction converting dihydrogeodin to geodin. This chain is Atrochrysone carboxylic acid synthase, found in Aspergillus terreus (strain NIH 2624 / FGSC A1156).